We begin with the raw amino-acid sequence, 562 residues long: tRNA (guanine(37)-N(1))-methyltransferase (562 aa).

Residues 1–41 (MLFRRFLNLTTKTPHLQTFRARHYFRNMSCPELIPPPTVRG) constitute a mitochondrion transit peptide. Residues His-243, 281-282 (DL), and Asn-340 contribute to the S-adenosyl-L-methionine site. The span at 523–534 (AHIVAKKPEKKP) shows a compositional bias: basic and acidic residues. A disordered region spans residues 523 to 562 (AHIVAKKPEKKPLPAKPASKKNKNQANTKQVEAGLDKMQM).

This sequence belongs to the class I-like SAM-binding methyltransferase superfamily. TRM5/TYW2 family. As to quaternary structure, monomer.

The protein resides in the mitochondrion matrix. It localises to the nucleus. It is found in the cytoplasm. It catalyses the reaction guanosine(37) in tRNA + S-adenosyl-L-methionine = N(1)-methylguanosine(37) in tRNA + S-adenosyl-L-homocysteine + H(+). Specifically methylates the N1 position of guanosine-37 in various cytoplasmic and mitochondrial tRNAs. Methylation is not dependent on the nature of the nucleoside 5' of the target nucleoside. This is the first step in the biosynthesis of wybutosine (yW), a modified base adjacent to the anticodon of tRNAs and required for accurate decoding. The protein is tRNA (guanine(37)-N(1))-methyltransferase of Aedes aegypti (Yellowfever mosquito).